Reading from the N-terminus, the 162-residue chain is RNA pyrophosphohydrolase (162 aa).

Positions 7–149 (KYRPCVGIML…KKEVYKTVIE (143 aa)) constitute a Nudix hydrolase domain. The short motif at 40–61 (GGVDDGEELEQAALRELLEEVG) is the Nudix box element.

Belongs to the Nudix hydrolase family. RppH subfamily. Requires a divalent metal cation as cofactor.

In terms of biological role, accelerates the degradation of transcripts by removing pyrophosphate from the 5'-end of triphosphorylated RNA, leading to a more labile monophosphorylated state that can stimulate subsequent ribonuclease cleavage. This chain is RNA pyrophosphohydrolase, found in Wolbachia sp. subsp. Drosophila simulans (strain wRi).